The primary structure comprises 299 residues: uncharacterized protein (299 aa).

It belongs to the glycosyltransferase 2 family.

This is an uncharacterized protein from Mycoplasma pneumoniae (strain ATCC 29342 / M129 / Subtype 1) (Mycoplasmoides pneumoniae).